Reading from the N-terminus, the 761-residue chain is Phosphoribosylformylglycinamidine synthase subunit PurL (761 aa).

Residue H58 is part of the active site. 2 residues coordinate ATP: Y61 and K105. Residue E107 participates in Mg(2+) binding. Substrate-binding positions include 108 to 111 (SHNH) and R130. H109 acts as the Proton acceptor in catalysis. D131 is a Mg(2+) binding site. Q259 is a substrate binding site. D287 is a binding site for Mg(2+). 331–333 (ESQ) is a substrate binding site. ATP is bound by residues N519 and G556. Position 557 (N557) interacts with Mg(2+). Residue S559 coordinates substrate.

This sequence belongs to the FGAMS family. Monomer. Part of the FGAM synthase complex composed of 1 PurL, 1 PurQ and 2 PurS subunits.

Its subcellular location is the cytoplasm. It carries out the reaction N(2)-formyl-N(1)-(5-phospho-beta-D-ribosyl)glycinamide + L-glutamine + ATP + H2O = 2-formamido-N(1)-(5-O-phospho-beta-D-ribosyl)acetamidine + L-glutamate + ADP + phosphate + H(+). It participates in purine metabolism; IMP biosynthesis via de novo pathway; 5-amino-1-(5-phospho-D-ribosyl)imidazole from N(2)-formyl-N(1)-(5-phospho-D-ribosyl)glycinamide: step 1/2. Its function is as follows. Part of the phosphoribosylformylglycinamidine synthase complex involved in the purines biosynthetic pathway. Catalyzes the ATP-dependent conversion of formylglycinamide ribonucleotide (FGAR) and glutamine to yield formylglycinamidine ribonucleotide (FGAM) and glutamate. The FGAM synthase complex is composed of three subunits. PurQ produces an ammonia molecule by converting glutamine to glutamate. PurL transfers the ammonia molecule to FGAR to form FGAM in an ATP-dependent manner. PurS interacts with PurQ and PurL and is thought to assist in the transfer of the ammonia molecule from PurQ to PurL. The chain is Phosphoribosylformylglycinamidine synthase subunit PurL from Rhodococcus jostii (strain RHA1).